Here is a 494-residue protein sequence, read N- to C-terminus: Glutamyl-tRNA(Gln) amidotransferase subunit A (494 aa).

Active-site charge relay system residues include Lys-79 and Ser-159. The Acyl-ester intermediate role is filled by Ser-183.

Belongs to the amidase family. GatA subfamily. As to quaternary structure, heterotrimer of A, B and C subunits.

The enzyme catalyses L-glutamyl-tRNA(Gln) + L-glutamine + ATP + H2O = L-glutaminyl-tRNA(Gln) + L-glutamate + ADP + phosphate + H(+). Its function is as follows. Allows the formation of correctly charged Gln-tRNA(Gln) through the transamidation of misacylated Glu-tRNA(Gln) in organisms which lack glutaminyl-tRNA synthetase. The reaction takes place in the presence of glutamine and ATP through an activated gamma-phospho-Glu-tRNA(Gln). This Bartonella henselae (strain ATCC 49882 / DSM 28221 / CCUG 30454 / Houston 1) (Rochalimaea henselae) protein is Glutamyl-tRNA(Gln) amidotransferase subunit A.